A 380-amino-acid chain; its full sequence is Succinyl-diaminopimelate desuccinylase (380 aa).

Histidine 69 provides a ligand contact to Zn(2+). Residue aspartate 71 is part of the active site. Position 102 (aspartate 102) interacts with Zn(2+). Glutamate 135 functions as the Proton acceptor in the catalytic mechanism. Positions 136, 164, and 353 each coordinate Zn(2+).

The protein belongs to the peptidase M20A family. DapE subfamily. Homodimer. Requires Zn(2+) as cofactor. Co(2+) is required as a cofactor.

The enzyme catalyses N-succinyl-(2S,6S)-2,6-diaminopimelate + H2O = (2S,6S)-2,6-diaminopimelate + succinate. It functions in the pathway amino-acid biosynthesis; L-lysine biosynthesis via DAP pathway; LL-2,6-diaminopimelate from (S)-tetrahydrodipicolinate (succinylase route): step 3/3. In terms of biological role, catalyzes the hydrolysis of N-succinyl-L,L-diaminopimelic acid (SDAP), forming succinate and LL-2,6-diaminopimelate (DAP), an intermediate involved in the bacterial biosynthesis of lysine and meso-diaminopimelic acid, an essential component of bacterial cell walls. The chain is Succinyl-diaminopimelate desuccinylase from Ruegeria pomeroyi (strain ATCC 700808 / DSM 15171 / DSS-3) (Silicibacter pomeroyi).